The primary structure comprises 130 residues: Small ribosomal subunit protein uS11 (130 aa).

The protein belongs to the universal ribosomal protein uS11 family. In terms of assembly, part of the 30S ribosomal subunit. Interacts with proteins S7 and S18. Binds to IF-3.

Functionally, located on the platform of the 30S subunit, it bridges several disparate RNA helices of the 16S rRNA. Forms part of the Shine-Dalgarno cleft in the 70S ribosome. This Prochlorococcus marinus subsp. pastoris (strain CCMP1986 / NIES-2087 / MED4) protein is Small ribosomal subunit protein uS11.